Here is a 61-residue protein sequence, read N- to C-terminus: Alpha-conotoxin-like Lp1.6a (61 aa).

Residues 1 to 21 form the signal peptide; it reads MGMRMMFIIFLFVVLATTVVS. A propeptide spanning residues 22–44 is cleaved from the precursor; it reads FTSGRASDGRNAPANNKVSDLIR. At Gln45 the chain carries Pyrrolidone carboxylic acid. 2 cysteine pairs are disulfide-bonded: Cys47-Cys53 and Cys48-Cys60. Cys60 is subject to Cysteine amide.

The protein belongs to the conotoxin A superfamily. Expressed by the venom duct.

It localises to the secreted. Its function is as follows. Alpha-conotoxins act on postsynaptic membranes, they bind to the nicotinic acetylcholine receptors (nAChR) and thus inhibit them. In Conus leopardus (Leopard cone), this protein is Alpha-conotoxin-like Lp1.6a.